The sequence spans 704 residues: Elongation factor G (704 aa).

The tr-type G domain occupies 8–290; the sequence is ARYRNIGISA…AVIDYLPSPV (283 aa). Residues 17 to 24, 88 to 92, and 142 to 145 each bind GTP; these read AHIDAGKT, DTPGH, and NKMD. Lys504 and Lys643 each carry N6-acetyllysine.

It belongs to the TRAFAC class translation factor GTPase superfamily. Classic translation factor GTPase family. EF-G/EF-2 subfamily.

Its subcellular location is the cytoplasm. Functionally, catalyzes the GTP-dependent ribosomal translocation step during translation elongation. During this step, the ribosome changes from the pre-translocational (PRE) to the post-translocational (POST) state as the newly formed A-site-bound peptidyl-tRNA and P-site-bound deacylated tRNA move to the P and E sites, respectively. Catalyzes the coordinated movement of the two tRNA molecules, the mRNA and conformational changes in the ribosome. The protein is Elongation factor G of Escherichia coli O17:K52:H18 (strain UMN026 / ExPEC).